The sequence spans 119 residues: Large ribosomal subunit protein uL18 (119 aa).

The protein belongs to the universal ribosomal protein uL18 family. In terms of assembly, part of the 50S ribosomal subunit; part of the 5S rRNA/L5/L18/L25 subcomplex. Contacts the 5S and 23S rRNAs.

This is one of the proteins that bind and probably mediate the attachment of the 5S RNA into the large ribosomal subunit, where it forms part of the central protuberance. This is Large ribosomal subunit protein uL18 from Chlorobaculum tepidum (strain ATCC 49652 / DSM 12025 / NBRC 103806 / TLS) (Chlorobium tepidum).